Consider the following 321-residue polypeptide: Peptide transport system permease protein SapB (321 aa).

8 helical membrane-spanning segments follow: residues 8-28 (HILWVALLLLVLSLLGFVILL), 41-61 (IYIGYFHYLGTLLQGDFGITY), 82-102 (CFITLFLAFIFGLPLGIISAV), 117-137 (YVGLSIPIFWLAPILLYVAAL), 150-170 (LLYEIKSITGFPVIDMWFMEV), 180-200 (ILQHLALPTLVLCILPTMEII), 249-269 (VFTLVLTQCMLVETALGWPGI), and 289-309 (VIVIGVCIILIDTFTKIFTFI). The ABC transmembrane type-1 domain occupies 75–303 (LPPTLELCFI…VCIILIDTFT (229 aa)).

The protein belongs to the binding-protein-dependent transport system permease family. OppBC subfamily.

It localises to the cell inner membrane. Involved in a peptide intake transport system that plays a role in the resistance to antimicrobial peptides. The polypeptide is Peptide transport system permease protein SapB (sapB) (Haemophilus influenzae (strain ATCC 51907 / DSM 11121 / KW20 / Rd)).